Consider the following 1087-residue polypeptide: Exportin-7-B (1087 aa).

Residues alanine 30–threonine 96 form the Importin N-terminal domain.

It belongs to the exportin family.

The protein localises to the cytoplasm. Its subcellular location is the nucleus. Functionally, mediates the nuclear export of proteins (cargos) with broad substrate specificity. The protein is Exportin-7-B (xpo7-b) of Xenopus laevis (African clawed frog).